We begin with the raw amino-acid sequence, 121 residues long: uncharacterized protein (121 aa).

Positions 20 to 98 (NEVRTSQSEV…PYYHGSKAST (79 aa)) are disordered. Over residues 35-51 (KKSDNGEKDEKEEKELN) the composition is skewed to basic and acidic residues.

This is an uncharacterized protein from Invertebrate iridescent virus 6 (IIV-6).